The following is a 538-amino-acid chain: ESX-3 secretion system ATPase EccB3 (538 aa).

A compositionally biased stretch (basic and acidic residues) spans M1–S16. The segment at M1–N25 is disordered. A helical transmembrane segment spans residues V75–I95.

This sequence belongs to the EccB family. In terms of assembly, part of the ESX-3 / type VII secretion system (T7SS), which is composed of cytosolic and membrane components. The ESX-3 membrane complex is composed of EccB3, EccC3, EccD3 and EccE3.

The protein localises to the cell inner membrane. In terms of biological role, an ATPase. Part of the ESX-3 specialized secretion system, which is important for iron and zinc uptake or homeostasis. The chain is ESX-3 secretion system ATPase EccB3 from Mycobacterium tuberculosis (strain CDC 1551 / Oshkosh).